Here is a 36-residue protein sequence, read N- to C-terminus: Photosystem I reaction center subunit VIII (36 aa).

Residues 8–28 (SLFVPLVGLVFPAIAMASLFL) traverse the membrane as a helical segment.

It belongs to the PsaI family.

Its subcellular location is the plastid. It is found in the chloroplast thylakoid membrane. In terms of biological role, may help in the organization of the PsaL subunit. This chain is Photosystem I reaction center subunit VIII, found in Brassica oleracea (Wild cabbage).